The following is a 125-amino-acid chain: Allatostatin (125 aa).

An N-terminal signal peptide occupies residues 1 to 26; that stretch reads MKTSAYNVYLGVVAAMLALLFVTINA. A propeptide spanning residues 27–106 is cleaved from the precursor; the sequence is APMEADDETA…SRLARQWRAD (80 aa). The residue at position 109 (glutamine 109) is a Pyrrolidone carboxylic acid.

This sequence belongs to the allatostatin family.

The protein resides in the secreted. Functionally, strongly inhibits juvenile hormone biosynthesis in vitro by the corpora allata from fifth-stadium larvae and adult females. This Spodoptera frugiperda (Fall armyworm) protein is Allatostatin.